The following is a 608-amino-acid chain: Amino-acid acetyltransferase, mitochondrial (608 aa).

An N-acetyltransferase domain is found at 402-604 (LNLITEHEKG…DICTRIEPSL (203 aa)).

It belongs to the acetyltransferase family.

The protein localises to the mitochondrion. The catalysed reaction is L-glutamate + acetyl-CoA = N-acetyl-L-glutamate + CoA + H(+). Its pathway is amino-acid biosynthesis; L-arginine biosynthesis; N(2)-acetyl-L-ornithine from L-glutamate: step 1/4. Its function is as follows. N-acetylglutamate synthase involved in arginine biosynthesis. The sequence is that of Amino-acid acetyltransferase, mitochondrial (ARG2) from Yarrowia lipolytica (strain CLIB 122 / E 150) (Yeast).